Here is a 715-residue protein sequence, read N- to C-terminus: Palmitoyltransferase ZDHHC5 (715 aa).

Topologically, residues methionine 1–lysine 13 are cytoplasmic. A helical membrane pass occupies residues tyrosine 14–phenylalanine 34. Residues threonine 35–glycine 38 are Extracellular-facing. Residues leucine 39–leucine 59 form a helical membrane-spanning segment. Residues alanine 60 to tyrosine 148 lie on the Cytoplasmic side of the membrane. Residue tyrosine 91 is modified to Phosphotyrosine. Residues lysine 104–leucine 154 enclose the DHHC domain. Residue cysteine 134 is the S-palmitoyl cysteine intermediate of the active site. A helical membrane pass occupies residues phenylalanine 149–leucine 169. Residues tyrosine 170–cysteine 191 are Extracellular-facing. The chain crosses the membrane as a helical span at residues valine 192 to alanine 212. At arginine 213–valine 715 the chain is on the cytoplasmic side. A Phosphoserine modification is found at serine 247. The interval glycine 289 to valine 715 is disordered. A Phosphothreonine modification is found at threonine 294. Residues serine 296 and serine 299 each carry the phosphoserine modification. At threonine 303 the chain carries Phosphothreonine. Serine 345 bears the Phosphoserine mark. Phosphothreonine occurs at positions 348 and 350. Positions serine 359 to alanine 373 are enriched in low complexity. Phosphoserine is present on residues serine 380, serine 398, serine 406, and serine 409. Position 411 is a phosphothreonine (threonine 411). Residues serine 415, serine 425, serine 429, and serine 432 each carry the phosphoserine modification. Positions serine 422–serine 432 are enriched in low complexity. The residue at position 436 (threonine 436) is a Phosphothreonine. The segment covering glutamine 442–aspartate 478 has biased composition (polar residues). Phosphoserine occurs at positions 529 and 554. Arginine 617 is modified (omega-N-methylarginine). A Phosphoserine modification is found at serine 621. A Phosphothreonine modification is found at threonine 659. Residues leucine 666–proline 677 show a composition bias toward polar residues. A phosphoserine mark is found at serine 684 and serine 694. An Omega-N-methylarginine modification is found at arginine 697.

It belongs to the DHHC palmitoyltransferase family. ERF2/ZDHHC9 subfamily.

Its subcellular location is the cell membrane. It carries out the reaction L-cysteinyl-[protein] + hexadecanoyl-CoA = S-hexadecanoyl-L-cysteinyl-[protein] + CoA. Palmitoyltransferase that catalyzes the addition of palmitate onto various protein substrates such as CTNND2, CD36, GSDMD, NLRP3, NOD1, NOD2, STAT3 and S1PR1 thus plays a role in various biological processes including cell adhesion, inflammation, fatty acid uptake, bacterial sensing or cardiac functions. Plays an important role in the regulation of synapse efficacy by mediating palmitoylation of delta-catenin/CTNND2, thereby increasing synaptic delivery and surface stabilization of alpha-amino-3-hydroxy-5-methyl-4-isoxazole propionic acid receptors (AMPARs). Under basal conditions, remains at the synaptic membrane through FYN-mediated phosphorylation that prevents association with endocytic proteins. Neuronal activity enhances the internalization and trafficking of DHHC5 from spines to dendritic shafts where it palmitoylates delta-catenin/CTNND2. Regulates cell adhesion at the plasma membrane by palmitoylating GOLGA7B and DSG2. Plays a role in innate immune response by mediating the palmitoylation of NOD1 and NOD2 and their proper recruitment to the bacterial entry site and phagosomes. Also participates in fatty acid uptake by palmitoylating CD36 and thereby targeting it to the plasma membrane. Upon binding of fatty acids to CD36, gets phosphorylated by LYN leading to inactivation and subsequent CD36 caveolar endocytosis. Controls oligodendrocyte development by catalyzing STAT3 palmitoylation. Acts as a regulator of inflammatory response by mediating palmitoylation of NLRP3 and GSDMD. Palmitoylates NLRP3 to promote inflammasome assembly and activation. Activates pyroptosis by catalyzing palmitoylation of gasdermin-D (GSDMD), thereby promoting membrane translocation and pore formation of GSDMD. The protein is Palmitoyltransferase ZDHHC5 (ZDHHC5) of Pan troglodytes (Chimpanzee).